Consider the following 104-residue polypeptide: ATP-dependent Clp protease adapter protein ClpS (104 aa).

The protein belongs to the ClpS family. Binds to the N-terminal domain of the chaperone ClpA.

Functionally, involved in the modulation of the specificity of the ClpAP-mediated ATP-dependent protein degradation. This Neisseria gonorrhoeae (strain ATCC 700825 / FA 1090) protein is ATP-dependent Clp protease adapter protein ClpS.